The following is a 379-amino-acid chain: Lipid-A-disaccharide synthase (379 aa).

This sequence belongs to the LpxB family.

It catalyses the reaction a lipid X + a UDP-2-N,3-O-bis[(3R)-3-hydroxyacyl]-alpha-D-glucosamine = a lipid A disaccharide + UDP + H(+). Its pathway is bacterial outer membrane biogenesis; LPS lipid A biosynthesis. In terms of biological role, condensation of UDP-2,3-diacylglucosamine and 2,3-diacylglucosamine-1-phosphate to form lipid A disaccharide, a precursor of lipid A, a phosphorylated glycolipid that anchors the lipopolysaccharide to the outer membrane of the cell. This chain is Lipid-A-disaccharide synthase, found in Vibrio campbellii (strain ATCC BAA-1116).